A 338-amino-acid polypeptide reads, in one-letter code: Ketol-acid reductoisomerase (NADP(+)) (338 aa).

The region spanning 1–181 is the KARI N-terminal Rossmann domain; the sequence is MKVYYDKDAD…GGTKGGVIET (181 aa). Residues 24–27, Arg47, and Ser52 each bind NADP(+); that span reads YGSQ. His107 is a catalytic residue. Position 133 (Gly133) interacts with NADP(+). In terms of domain architecture, KARI C-terminal knotted spans 182–327; the sequence is NFREETETDL…SQLRAMMPWI (146 aa). Asp190, Glu194, Glu226, and Glu230 together coordinate Mg(2+). A substrate-binding site is contributed by Ser251.

It belongs to the ketol-acid reductoisomerase family. Mg(2+) serves as cofactor.

It catalyses the reaction (2R)-2,3-dihydroxy-3-methylbutanoate + NADP(+) = (2S)-2-acetolactate + NADPH + H(+). The enzyme catalyses (2R,3R)-2,3-dihydroxy-3-methylpentanoate + NADP(+) = (S)-2-ethyl-2-hydroxy-3-oxobutanoate + NADPH + H(+). Its pathway is amino-acid biosynthesis; L-isoleucine biosynthesis; L-isoleucine from 2-oxobutanoate: step 2/4. The protein operates within amino-acid biosynthesis; L-valine biosynthesis; L-valine from pyruvate: step 2/4. Involved in the biosynthesis of branched-chain amino acids (BCAA). Catalyzes an alkyl-migration followed by a ketol-acid reduction of (S)-2-acetolactate (S2AL) to yield (R)-2,3-dihydroxy-isovalerate. In the isomerase reaction, S2AL is rearranged via a Mg-dependent methyl migration to produce 3-hydroxy-3-methyl-2-ketobutyrate (HMKB). In the reductase reaction, this 2-ketoacid undergoes a metal-dependent reduction by NADPH to yield (R)-2,3-dihydroxy-isovalerate. This chain is Ketol-acid reductoisomerase (NADP(+)), found in Methylobacillus flagellatus (strain ATCC 51484 / DSM 6875 / VKM B-1610 / KT).